Consider the following 83-residue polypeptide: Short neurotoxin NCA-02/NCA-05/UER-05 (83 aa).

Residues 1-21 form the signal peptide; sequence MKTLLLTLVVVTMVCLDLGYT. 4 disulfide bridges follow: Cys-24-Cys-45, Cys-38-Cys-62, Cys-64-Cys-75, and Cys-76-Cys-81.

Belongs to the three-finger toxin family. Short-chain subfamily. Type I alpha-neurotoxin sub-subfamily. In terms of tissue distribution, expressed by the venom gland.

The protein localises to the secreted. In terms of biological role, binds to muscle nicotinic acetylcholine receptor (nAChR) and inhibit acetylcholine from binding to the receptor, thereby impairing neuromuscular transmission. The sequence is that of Short neurotoxin NCA-02/NCA-05/UER-05 from Laticauda colubrina (Yellow-lipped sea krait).